A 192-amino-acid polypeptide reads, in one-letter code: Large ribosomal subunit protein uL5 (192 aa).

Belongs to the universal ribosomal protein uL5 family. Part of the 50S ribosomal subunit; contacts the 5S rRNA and probably tRNA. Forms a bridge to the 30S subunit in the 70S ribosome.

In terms of biological role, this is one of the proteins that bind and probably mediate the attachment of the 5S RNA into the large ribosomal subunit, where it forms part of the central protuberance. In the 70S ribosome it contacts protein S13 of the 30S subunit (bridge B1b), connecting the 2 subunits; this bridge is implicated in subunit movement. May contact the P site tRNA; the 5S rRNA and some of its associated proteins might help stabilize positioning of ribosome-bound tRNAs. The protein is Large ribosomal subunit protein uL5 of Aeropyrum pernix (strain ATCC 700893 / DSM 11879 / JCM 9820 / NBRC 100138 / K1).